The sequence spans 1023 residues: Exportin-T (1023 aa).

The protein belongs to the exportin family.

The protein resides in the nucleus. It localises to the cytoplasm. In terms of biological role, tRNA nucleus export receptor which facilitates tRNA translocation across the nuclear pore complex. Involved in pre-tRNA splicing, probably by affecting the interaction of pre-tRNA with splicing endonuclease. The polypeptide is Exportin-T (los1) (Sclerotinia sclerotiorum (strain ATCC 18683 / 1980 / Ss-1) (White mold)).